Reading from the N-terminus, the 384-residue chain is Sodium channel protein Nach (384 aa).

Residues 1–319 are Extracellular-facing; the sequence is AAFAYFSGFM…LVSHLGSAFS (319 aa). 2 N-linked (GlcNAc...) asparagine glycosylation sites follow: Asn-32 and Asn-215. The helical transmembrane segment at 320–340 threads the bilayer; that stretch reads LFVGMSMLSLVEIIYYFTVIL. Residues 341–384 lie on the Cytoplasmic side of the membrane; it reads RRNYVQECRARQKLQTLHRRPNFGWPGDKNSNQQKSVFYIRGRN.

It belongs to the amiloride-sensitive sodium channel (TC 1.A.6) family.

The protein localises to the membrane. In terms of biological role, part of a complex that plays a role in tracheal liquid clearance. Probable role in sodium transport. The polypeptide is Sodium channel protein Nach (Nach) (Drosophila virilis (Fruit fly)).